The chain runs to 682 residues: Tail-specific protease (682 aa).

Positions 1 to 22 (MNTFFRLTALAGLLALAGQSFA) are cleaved as a signal peptide. The region spanning 238–322 (NTEMSLSLEG…SKVRLEILPA (85 aa)) is the PDZ domain. Catalysis depends on charge relay system residues serine 452, aspartate 463, and lysine 477.

It belongs to the peptidase S41A family.

The protein resides in the cell inner membrane. The enzyme catalyses The enzyme shows specific recognition of a C-terminal tripeptide, Xaa-Yaa-Zaa, in which Xaa is preferably Ala or Leu, Yaa is preferably Ala or Tyr, and Zaa is preferably Ala, but then cleaves at a variable distance from the C-terminus. A typical cleavage is -Ala-Ala-|-Arg-Ala-Ala-Lys-Glu-Asn-Tyr-Ala-Leu-Ala-Ala.. In terms of biological role, involved in the cleavage of a C-terminal peptide of 11 residues from the precursor form of penicillin-binding protein 3 (PBP3). May be involved in protection of the bacterium from thermal and osmotic stresses. In Salmonella typhimurium (strain LT2 / SGSC1412 / ATCC 700720), this protein is Tail-specific protease (prc).